The primary structure comprises 159 residues: Protein-export protein SecB (159 aa).

This sequence belongs to the SecB family. In terms of assembly, homotetramer, a dimer of dimers. One homotetramer interacts with 1 SecA dimer.

The protein localises to the cytoplasm. Its function is as follows. One of the proteins required for the normal export of preproteins out of the cell cytoplasm. It is a molecular chaperone that binds to a subset of precursor proteins, maintaining them in a translocation-competent state. It also specifically binds to its receptor SecA. The protein is Protein-export protein SecB of Bartonella bacilliformis (strain ATCC 35685 / KC583 / Herrer 020/F12,63).